Consider the following 340-residue polypeptide: Phosphoribosylformylglycinamidine cyclo-ligase (340 aa).

Belongs to the AIR synthase family.

Its subcellular location is the cytoplasm. The catalysed reaction is 2-formamido-N(1)-(5-O-phospho-beta-D-ribosyl)acetamidine + ATP = 5-amino-1-(5-phospho-beta-D-ribosyl)imidazole + ADP + phosphate + H(+). It participates in purine metabolism; IMP biosynthesis via de novo pathway; 5-amino-1-(5-phospho-D-ribosyl)imidazole from N(2)-formyl-N(1)-(5-phospho-D-ribosyl)glycinamide: step 2/2. The polypeptide is Phosphoribosylformylglycinamidine cyclo-ligase (Streptococcus sanguinis (strain SK36)).